Here is a 67-residue protein sequence, read N- to C-terminus: Large ribosomal subunit protein bL35 (67 aa).

Residues 22 to 45 (GKIKRWKSGGAHYNTKKSSKRKRH) form a disordered region. Residues 35 to 45 (NTKKSSKRKRH) are compositionally biased toward basic residues.

The protein belongs to the bacterial ribosomal protein bL35 family.

This chain is Large ribosomal subunit protein bL35, found in Aquifex aeolicus (strain VF5).